Consider the following 391-residue polypeptide: Glycerol-3-phosphate dehydrogenase [NAD(+)] (391 aa).

NAD(+) contacts are provided by residues 46-51, phenylalanine 78, and phenylalanine 134; that span reads GSGNWG. Residue lysine 157 participates in substrate binding. Alanine 190 provides a ligand contact to NAD(+). Lysine 250 serves as the catalytic Proton acceptor. Arginine 315 and glutamine 344 together coordinate NAD(+). 315 to 316 contributes to the substrate binding site; sequence RN.

It belongs to the NAD-dependent glycerol-3-phosphate dehydrogenase family.

The catalysed reaction is sn-glycerol 3-phosphate + NAD(+) = dihydroxyacetone phosphate + NADH + H(+). This chain is Glycerol-3-phosphate dehydrogenase [NAD(+)] (GPD), found in Candida tropicalis (Yeast).